A 258-amino-acid chain; its full sequence is Pimeloyl-[acyl-carrier protein] methyl ester esterase (258 aa).

The region spanning 16 to 244 (LVLVHGWGMN…QSSHAPFMTE (229 aa)) is the AB hydrolase-1 domain. Substrate is bound by residues tryptophan 22, 82-83 (SL), and 146-150 (FMALQ). The Nucleophile role is filled by serine 82. Catalysis depends on residues aspartate 210 and histidine 238. Residue histidine 238 coordinates substrate.

It belongs to the AB hydrolase superfamily. Carboxylesterase BioH family. In terms of assembly, monomer.

The protein localises to the cytoplasm. It carries out the reaction 6-carboxyhexanoyl-[ACP] methyl ester + H2O = 6-carboxyhexanoyl-[ACP] + methanol + H(+). Its pathway is cofactor biosynthesis; biotin biosynthesis. The physiological role of BioH is to remove the methyl group introduced by BioC when the pimeloyl moiety is complete. It allows to synthesize pimeloyl-ACP via the fatty acid synthetic pathway through the hydrolysis of the ester bonds of pimeloyl-ACP esters. The sequence is that of Pimeloyl-[acyl-carrier protein] methyl ester esterase from Vibrio atlanticus (strain LGP32) (Vibrio splendidus (strain Mel32)).